The following is a 281-amino-acid chain: Cytochrome bc1 complex cytochrome c subunit (281 aa).

The helical transmembrane segment at 17–37 (AAGAMALAVGLTGAGILVNAV) threads the bilayer. Cytochrome c domains are found at residues 52-132 (ALIQ…EANG) and 162-240 (ADVA…KSAK). Heme c-binding residues include cysteine 65, cysteine 68, histidine 69, cysteine 175, cysteine 178, and histidine 179. The chain crosses the membrane as a helical span at residues 259 to 279 (GMMMWLVGIVVLVAAAMWIGS).

The cytochrome bc1 complex is composed of a cytochrome b (QcrB), the Rieske iron-sulfur protein (QcrA) and a diheme cytochrome c (QcrC) subunit. The bc1 complex forms a supercomplex with cytochrome c oxidase (cytochrome aa3). Binds 2 heme c groups covalently per subunit.

The protein localises to the cell membrane. It carries out the reaction a quinol + 2 Fe(III)-[cytochrome c](out) = a quinone + 2 Fe(II)-[cytochrome c](out) + 2 H(+)(out). Cytochrome c1 subunit of the cytochrome bc1 complex, an essential component of the respiratory electron transport chain required for ATP synthesis. The bc1 complex catalyzes the oxidation of menaquinol and the reduction of cytochrome c in the respiratory chain. The bc1 complex operates through a Q-cycle mechanism that couples electron transfer to generation of the proton gradient that drives ATP synthesis. In Corynebacterium diphtheriae (strain ATCC 700971 / NCTC 13129 / Biotype gravis), this protein is Cytochrome bc1 complex cytochrome c subunit (qcrC).